Here is a 481-residue protein sequence, read N- to C-terminus: Glutamyl-tRNA(Gln) amidotransferase subunit A (481 aa).

Residues Lys75 and Ser150 each act as charge relay system in the active site. The active-site Acyl-ester intermediate is the Ser174.

Belongs to the amidase family. GatA subfamily. In terms of assembly, heterotrimer of A, B and C subunits.

The catalysed reaction is L-glutamyl-tRNA(Gln) + L-glutamine + ATP + H2O = L-glutaminyl-tRNA(Gln) + L-glutamate + ADP + phosphate + H(+). In terms of biological role, allows the formation of correctly charged Gln-tRNA(Gln) through the transamidation of misacylated Glu-tRNA(Gln) in organisms which lack glutaminyl-tRNA synthetase. The reaction takes place in the presence of glutamine and ATP through an activated gamma-phospho-Glu-tRNA(Gln). This chain is Glutamyl-tRNA(Gln) amidotransferase subunit A, found in Macrococcus caseolyticus (strain JCSC5402) (Macrococcoides caseolyticum).